The following is a 156-amino-acid chain: Nucleoredoxin-like protein 2 (156 aa).

Residues 9-147 enclose the Thioredoxin domain; that stretch reads HLVTCKGATV…LACFQDWVEA (139 aa).

The protein belongs to the nucleoredoxin family.

Functionally, may be involved in the maintenance of both the function and the viability of sensory neurons, including photoreceptors and olfactory neurons. This Homo sapiens (Human) protein is Nucleoredoxin-like protein 2 (NXNL2).